The chain runs to 166 residues: 2-C-methyl-D-erythritol 2,4-cyclodiphosphate synthase (166 aa).

A divalent metal cation contacts are provided by Asp12 and His14. Residues 12 to 14 and 38 to 39 each bind 4-CDP-2-C-methyl-D-erythritol 2-phosphate; these read DSH and HS. A divalent metal cation is bound at residue His46. 4-CDP-2-C-methyl-D-erythritol 2-phosphate-binding positions include 60–62, 65–69, and Arg146; these read DIG and FPDTD.

Belongs to the IspF family. Homotrimer. The cofactor is a divalent metal cation.

It catalyses the reaction 4-CDP-2-C-methyl-D-erythritol 2-phosphate = 2-C-methyl-D-erythritol 2,4-cyclic diphosphate + CMP. It participates in isoprenoid biosynthesis; isopentenyl diphosphate biosynthesis via DXP pathway; isopentenyl diphosphate from 1-deoxy-D-xylulose 5-phosphate: step 4/6. Functionally, involved in the biosynthesis of isopentenyl diphosphate (IPP) and dimethylallyl diphosphate (DMAPP), two major building blocks of isoprenoid compounds. Catalyzes the conversion of 4-diphosphocytidyl-2-C-methyl-D-erythritol 2-phosphate (CDP-ME2P) to 2-C-methyl-D-erythritol 2,4-cyclodiphosphate (ME-CPP) with a corresponding release of cytidine 5-monophosphate (CMP). This is 2-C-methyl-D-erythritol 2,4-cyclodiphosphate synthase from Gemmatimonas aurantiaca (strain DSM 14586 / JCM 11422 / NBRC 100505 / T-27).